An 86-amino-acid chain; its full sequence is Cell division topological specificity factor (86 aa).

This sequence belongs to the MinE family.

Functionally, prevents the cell division inhibition by proteins MinC and MinD at internal division sites while permitting inhibition at polar sites. This ensures cell division at the proper site by restricting the formation of a division septum at the midpoint of the long axis of the cell. This is Cell division topological specificity factor from Allorhizobium ampelinum (strain ATCC BAA-846 / DSM 112012 / S4) (Agrobacterium vitis (strain S4)).